The chain runs to 932 residues: MDYNKTLNLPRTDFPMKANLPTREPEILKRWEEMDIYHKTLEKNKGKEKYILHDGPPYANGDIHIGTAMNKVLKDIIVKYKTMRGYDAPYVPGWDTHGLPIEQQAIKTLGIKRHEVSPTEFRKVCRDFAFSQIEKQKAQFKRLGVRGDWDNPYLTLNPEYEAKQIEVFGEMAKKGYIYKGLKPVYWCPSCETALAEAEIEYFDETSDSIYVKFRVKDDLGKFKGIVENLNNVYFVIWTTTTWTIPANLAIALNPEFDYALAKFGDEVYIMAKDMLDTVKKEANLSDYEIVAVFKGKDLEGMKATHPLYDRDSLIILGEHVTLEAGTGCVHTAPGHGEEDFLVGQEYGLEVLNPIDDKGYFTDKAPGYAGLYYEEANKVIKEDLKKANALVAETRITHSYPHCWRCKSPIIFRATEQWFASVEGFREEALKAIKEVNWYPSWGEERITNMVRDRRDWCISRQRVWGVPIPIFYCEKCGKPLINDDTINAVKKIFRQKGSDAWFEMSAEEILPKGITCECGSTKFRKETDIMDVWFDSGSSHAAVLQTHPDLKWPAELYLEGSDQHRGWFQSSLLTSVATRGKAPYRNVLTHGFVVDGEGRKMSKSLGNGIDPADVIKEYGADILRLWTVSADFTSDMRISQEILKQMTEAYRKIRNTSKFLLSNLYDFDPDKDMLPYEELLEIDKWALFRLNRVVEELTEAFDKYEYYDFLHLVHTFCVVDMSSLYLDILKDRLYTYPATSKERRAAQTTLYIILDTLVRLIAPVLTFTSEEIWSYMKHDSQNNFESVQLADWPQVQEKYNNPYIIEKWEKLFDIRKDISKALEIARTDKKIGHSLEAQVDIYPSQELYDFFKGFNDLEYVFIVSKVVLHQPEEPAPQNAYESDDYNLKIVVTHAPGEKCERCWMYSETVGTIKEHPTICARCASHIEQQTQV.

The short motif at 57-67 (PYANGDIHIGT) is the 'HIGH' region element. L-isoleucyl-5'-AMP is bound at residue Glu-559. The 'KMSKS' region motif lies at 600-604 (KMSKS). Residue Lys-603 coordinates ATP. Residues Cys-899, Cys-902, Cys-919, and Cys-922 each coordinate Zn(2+).

The protein belongs to the class-I aminoacyl-tRNA synthetase family. IleS type 1 subfamily. In terms of assembly, monomer. Zn(2+) is required as a cofactor.

The protein resides in the cytoplasm. The enzyme catalyses tRNA(Ile) + L-isoleucine + ATP = L-isoleucyl-tRNA(Ile) + AMP + diphosphate. In terms of biological role, catalyzes the attachment of isoleucine to tRNA(Ile). As IleRS can inadvertently accommodate and process structurally similar amino acids such as valine, to avoid such errors it has two additional distinct tRNA(Ile)-dependent editing activities. One activity is designated as 'pretransfer' editing and involves the hydrolysis of activated Val-AMP. The other activity is designated 'posttransfer' editing and involves deacylation of mischarged Val-tRNA(Ile). In Thermoanaerobacter pseudethanolicus (strain ATCC 33223 / 39E) (Clostridium thermohydrosulfuricum), this protein is Isoleucine--tRNA ligase.